Consider the following 234-residue polypeptide: Phosphoribosylaminoimidazole-succinocarboxamide synthase (234 aa).

It belongs to the SAICAR synthetase family.

It catalyses the reaction 5-amino-1-(5-phospho-D-ribosyl)imidazole-4-carboxylate + L-aspartate + ATP = (2S)-2-[5-amino-1-(5-phospho-beta-D-ribosyl)imidazole-4-carboxamido]succinate + ADP + phosphate + 2 H(+). It functions in the pathway purine metabolism; IMP biosynthesis via de novo pathway; 5-amino-1-(5-phospho-D-ribosyl)imidazole-4-carboxamide from 5-amino-1-(5-phospho-D-ribosyl)imidazole-4-carboxylate: step 1/2. This chain is Phosphoribosylaminoimidazole-succinocarboxamide synthase, found in Staphylococcus carnosus (strain TM300).